The sequence spans 106 residues: Small ribosomal subunit protein uS10 (106 aa).

Belongs to the universal ribosomal protein uS10 family. As to quaternary structure, part of the 30S ribosomal subunit.

In terms of biological role, involved in the binding of tRNA to the ribosomes. The sequence is that of Small ribosomal subunit protein uS10 from Synechococcus sp. (strain CC9605).